Reading from the N-terminus, the 61-residue chain is Small ribosomal subunit protein uS14 (61 aa).

The Zn(2+) site is built by C24, C27, C40, and C43.

The protein belongs to the universal ribosomal protein uS14 family. Zinc-binding uS14 subfamily. In terms of assembly, part of the 30S ribosomal subunit. Contacts proteins S3 and S10. Requires Zn(2+) as cofactor.

Binds 16S rRNA, required for the assembly of 30S particles and may also be responsible for determining the conformation of the 16S rRNA at the A site. This is Small ribosomal subunit protein uS14 from Moorella thermoacetica (strain ATCC 39073 / JCM 9320).